We begin with the raw amino-acid sequence, 394 residues long: Obg-like ATPase 1 (394 aa).

The OBG-type G domain occupies 25 to 282 (LKIGIVGLPN…MPPDEAAKYC (258 aa)). ATP contacts are provided by residues 34–39 (NVGKST), 56–60 (FCTID), and 94–97 (DIAG). GTP is bound at residue 34–39 (NVGKST). 2 residues coordinate Mg(2+): serine 38 and threonine 58. GTP contacts are provided by phenylalanine 129 and asparagine 230. Residues 230 to 231 (NM), methionine 231, and 263 to 265 (SCA) each bind ATP. A GTP-binding site is contributed by 263–265 (SCA). A TGS domain is found at 303-386 (HLIYFFTAGP…QDGDIIFFKF (84 aa)).

Belongs to the TRAFAC class OBG-HflX-like GTPase superfamily. OBG GTPase family. YchF/OLA1 subfamily. Monomer (Potential). Interacts with GAP1. Mg(2+) is required as a cofactor.

It is found in the cell membrane. The protein localises to the cytoplasm. Its subcellular location is the cytosol. Activated by GAP1. Hydrolyzes ATP, and can also hydrolyze GTP with lower efficiency. Has lower affinity for GTP (Potential). Exhibits GTPase activity. Exhibits similar binding affinities and hydrolytic activities toward both GTP and ATP. Binds to the 26 S ribosomal RNA in vitro, but not to the 5.8 S or 18 S rRNA. Confers sensitivity to salinity stress by suppressing the anti-oxidation enzymatic activities and increasing lipid peroxidation thus leading to the accumulation of reactive oxygen species (ROS). This is Obg-like ATPase 1 from Oryza sativa subsp. japonica (Rice).